The primary structure comprises 463 residues: Bifunctional protein GlmU (463 aa).

A pyrophosphorylase region spans residues 1–233; that stretch reads MSKKSTFIIL…NFEVMGINSR (233 aa). UDP-N-acetyl-alpha-D-glucosamine is bound by residues 10–13, K24, Q76, 81–82, 104–106, G143, E158, N173, and N231; these read LAAG, GT, and YGD. Position 106 (D106) interacts with Mg(2+). Residue N231 participates in Mg(2+) binding. The tract at residues 234 to 254 is linker; it reads YELFVAEQELKLRINKEHLSK. The segment at 255 to 463 is N-acetyltransferase; it reads GVQIIDIYST…LRRKQMYENR (209 aa). Residues R336 and K354 each contribute to the UDP-N-acetyl-alpha-D-glucosamine site. H366 serves as the catalytic Proton acceptor. UDP-N-acetyl-alpha-D-glucosamine is bound by residues Y369 and N380. Residues 389–390, A426, and R443 contribute to the acetyl-CoA site; that span reads NY.

It in the N-terminal section; belongs to the N-acetylglucosamine-1-phosphate uridyltransferase family. The protein in the C-terminal section; belongs to the transferase hexapeptide repeat family. Homotrimer. Mg(2+) is required as a cofactor.

The protein localises to the cytoplasm. It carries out the reaction alpha-D-glucosamine 1-phosphate + acetyl-CoA = N-acetyl-alpha-D-glucosamine 1-phosphate + CoA + H(+). It catalyses the reaction N-acetyl-alpha-D-glucosamine 1-phosphate + UTP + H(+) = UDP-N-acetyl-alpha-D-glucosamine + diphosphate. The protein operates within nucleotide-sugar biosynthesis; UDP-N-acetyl-alpha-D-glucosamine biosynthesis; N-acetyl-alpha-D-glucosamine 1-phosphate from alpha-D-glucosamine 6-phosphate (route II): step 2/2. It participates in nucleotide-sugar biosynthesis; UDP-N-acetyl-alpha-D-glucosamine biosynthesis; UDP-N-acetyl-alpha-D-glucosamine from N-acetyl-alpha-D-glucosamine 1-phosphate: step 1/1. Its pathway is bacterial outer membrane biogenesis; LPS lipid A biosynthesis. Catalyzes the last two sequential reactions in the de novo biosynthetic pathway for UDP-N-acetylglucosamine (UDP-GlcNAc). The C-terminal domain catalyzes the transfer of acetyl group from acetyl coenzyme A to glucosamine-1-phosphate (GlcN-1-P) to produce N-acetylglucosamine-1-phosphate (GlcNAc-1-P), which is converted into UDP-GlcNAc by the transfer of uridine 5-monophosphate (from uridine 5-triphosphate), a reaction catalyzed by the N-terminal domain. In Caldicellulosiruptor saccharolyticus (strain ATCC 43494 / DSM 8903 / Tp8T 6331), this protein is Bifunctional protein GlmU.